The following is a 454-amino-acid chain: Histidine--tRNA ligase (454 aa).

It belongs to the class-II aminoacyl-tRNA synthetase family. Homodimer.

Its subcellular location is the cytoplasm. It catalyses the reaction tRNA(His) + L-histidine + ATP = L-histidyl-tRNA(His) + AMP + diphosphate + H(+). The protein is Histidine--tRNA ligase of Phocaeicola vulgatus (strain ATCC 8482 / DSM 1447 / JCM 5826 / CCUG 4940 / NBRC 14291 / NCTC 11154) (Bacteroides vulgatus).